The following is a 343-amino-acid chain: tRNA-splicing endonuclease (343 aa).

Active-site residues include tyrosine 277, histidine 288, and lysine 319.

Belongs to the tRNA-intron endonuclease family. Archaeal long subfamily. Homodimer.

It catalyses the reaction pretRNA = a 3'-half-tRNA molecule with a 5'-OH end + a 5'-half-tRNA molecule with a 2',3'-cyclic phosphate end + an intron with a 2',3'-cyclic phosphate and a 5'-hydroxyl terminus.. Endonuclease that removes tRNA introns. Cleaves pre-tRNA at the 5' and 3' splice sites to release the intron. The products are an intron and two tRNA half-molecules bearing 2',3' cyclic phosphate and 5'-OH termini. Recognizes a pseudosymmetric substrate in which 2 bulged loops of 3 bases are separated by a stem of 4 bp. The chain is tRNA-splicing endonuclease from Halobacterium salinarum (strain ATCC 29341 / DSM 671 / R1).